Here is a 212-residue protein sequence, read N- to C-terminus: Thymidylate kinase (212 aa).

11-18 (GLEGAGKT) contacts ATP.

Belongs to the thymidylate kinase family.

It catalyses the reaction dTMP + ATP = dTDP + ADP. In terms of biological role, phosphorylation of dTMP to form dTDP in both de novo and salvage pathways of dTTP synthesis. The chain is Thymidylate kinase (tmk) from Buchnera aphidicola subsp. Acyrthosiphon pisum (strain APS) (Acyrthosiphon pisum symbiotic bacterium).